Here is a 105-residue protein sequence, read N- to C-terminus: DRDAQTLTDERSDQGDGNFRYEFETSNGIYTQKTGTPGSEGQSNHQGSFRFTLEDGTIAEVTYIADEYGYQPSSDLLPVPPPAPPHVQRLLEIAAEQRAQGITFD.

The tract at residues Asp-1–Tyr-21 is disordered. The Chitin-binding type R&amp;R domain maps to Asp-16–Pro-81.

As to expression, arthrodial membrane.

This chain is Cuticle protein AMP1B, found in Homarus americanus (American lobster).